We begin with the raw amino-acid sequence, 420 residues long: MVSKALLRLVSAVNRRRMKLLLGIALLAYVASVWGNFVNMRSIQENGELKIESKIEEMVEPLREKIRDLEKSFTQKYPPVKFLSEKDRKRILITGGAGFVGSHLTDKLMMDGHEVTVVDNFFTGRKRNVEHWIGHENFELINHDVVEPLYIEVDQIYHLASPASPPNYMYNPIKTLKTNTIGTLNMLGLAKRVGARLLLASTSEVYGDPEVHPQSEDYWGHVNPIGPRACYDEGKRVAETMCYAYMKQEGVEVRVARIFNTFGPRMHMNDGRVVSNFILQALQGEPLTVYGSGSQTRAFQYVSDLVNGLVALMNSNVSSPVNLGNPEEHTILEFAQLIKNLVGSGSEIQFLSEAQDDPQKRKPDIKKAKLMLGWEPVVPLEEGLNKAIHYFRKELEYQANNQYIPKPKPARIKKGRTRHN.

Met1 bears the N-acetylmethionine mark. At 1–19 (MVSKALLRLVSAVNRRRMK) the chain is on the cytoplasmic side. A helical; Signal-anchor for type II membrane protein transmembrane segment spans residues 20-40 (LLLGIALLAYVASVWGNFVNM). Topologically, residues 41 to 420 (RSIQENGELK…RIKKGRTRHN (380 aa)) are lumenal. Thr94 carries the phosphothreonine modification. NAD(+)-binding residues include Gly98, Phe99, Val100, Asp119, Asn120, Phe122, Thr123, Gly124, Asp144, and Val145. 2 residues coordinate UDP-alpha-D-glucuronate: Leu149 and Tyr150. NAD(+) is bound by residues Leu159 and Ser161. Lys177 is a binding site for UDP-alpha-D-glucuronate. Thr178 provides a ligand contact to NAD(+). The UDP-alpha-D-glucuronate site is built by Asn185, Gly188, Lys191, and Arg192. NAD(+) is bound by residues Ala200, Tyr231, and Lys235. The Proton acceptor role is filled by Tyr231. Residues Tyr245, Gln248, and Glu249 each contribute to the UDP-alpha-D-glucuronate site. Thr261, His267, and Arg272 together coordinate NAD(+). N-linked (GlcNAc...) asparagine glycosylation is present at Asn316.

Belongs to the NAD(P)-dependent epimerase/dehydratase family. UDP-glucuronic acid decarboxylase subfamily. In terms of assembly, homodimer and homotetramer. Interacts with AKT1. The cofactor is NAD(+).

The protein resides in the golgi apparatus. It localises to the golgi stack membrane. It catalyses the reaction UDP-alpha-D-glucuronate + H(+) = UDP-alpha-D-xylose + CO2. It functions in the pathway nucleotide-sugar biosynthesis; UDP-alpha-D-xylose biosynthesis; UDP-alpha-D-xylose from UDP-alpha-D-glucuronate: step 1/1. Catalyzes the NAD-dependent decarboxylation of UDP-glucuronic acid to UDP-xylose. Necessary for the biosynthesis of the core tetrasaccharide in glycosaminoglycan biosynthesis. The chain is UDP-glucuronic acid decarboxylase 1 (UXS1) from Pongo abelii (Sumatran orangutan).